A 175-amino-acid polypeptide reads, in one-letter code: Disulfide bond formation protein B (175 aa).

Over 1-13 (MTAFTRFAHSRAS) the chain is Cytoplasmic. Residues 14–30 (WFILTGSAIALEAAALY) form a helical membrane-spanning segment. Over 31–48 (FQYVMKLDPCVMCIYQRL) the chain is Periplasmic. Cysteines 40 and 43 form a disulfide. The helical transmembrane segment at 49–64 (AVFGILASGLIGMTAP) threads the bilayer. Over 65–71 (KFLIVRI) the chain is Cytoplasmic. A helical membrane pass occupies residues 72–89 (LGAIGWAVSATWGLKLAL). At 90-144 (ALVDMQNNPSPFSTCSFLPEFPAWMPLHEWFPSVMLPTGMCTDVPWQFMGVTMAE) the chain is on the periplasmic side. Cysteine 104 and cysteine 130 are oxidised to a cystine. Residues 145–163 (WMVVAFSGYLVALLLFIVP) traverse the membrane as a helical segment. Residues 164 to 175 (ILSGSNKPSLYK) lie on the Cytoplasmic side of the membrane.

The protein belongs to the DsbB family.

The protein localises to the cell inner membrane. Required for disulfide bond formation in some periplasmic proteins. Acts by oxidizing the DsbA protein. This is Disulfide bond formation protein B from Shewanella sp. (strain ANA-3).